Consider the following 967-residue polypeptide: Kinesin heavy chain (967 aa).

A Kinesin motor domain is found at 8-326; the sequence is NIKVICRVRP…LLFGQRAKTI (319 aa). Residue 85-92 coordinates ATP; sequence GQTSSGKT. Residues 173–314 form a microtubule-binding region; that stretch reads VSSPEEVMEV…PASYNESETK (142 aa). 2 disordered regions span residues 387–411 and 923–967; these read VPAE…NEGD and KPIR…ESKA. Residues 392-861 are a coiled coil; it reads PATSTTSLAG…RDNADLRCEL (470 aa). Residues 862-967 form a globular region; the sequence is PKLEKRLRAT…PIRMAPESKA (106 aa). Over residues 949-958 the composition is skewed to polar residues; the sequence is QNGPMITSTP.

Belongs to the TRAFAC class myosin-kinesin ATPase superfamily. Kinesin family. Kinesin subfamily. Oligomer composed of two heavy chains and two light chains. Interacts with amyloid-beta precursor-like protein (via cytoplasmic domain).

The protein localises to the cytoplasm. The protein resides in the cytoskeleton. It is found in the cell projection. Its subcellular location is the axon. Its function is as follows. Kinesin is a microtubule-associated force-producing protein that may play a role in organelle transport. The protein is Kinesin heavy chain of Doryteuthis pealeii (Longfin inshore squid).